A 765-amino-acid polypeptide reads, in one-letter code: Amyloid beta precursor like protein 2 (765 aa).

The N-terminal stretch at 1–31 (MAATGTAAAAATGKLLVLLLLGLTAPAAALA) is a signal peptide. Topologically, residues 32–695 (GYIEALAANA…LREDFSLSSS (664 aa)) are extracellular. A GFLD subdomain region spans residues 46–139 (AVAEPQIAMF…PFKCLVGEFV (94 aa)). The region spanning 46-205 (AVAEPQIAMF…HGTEYVCCPQ (160 aa)) is the E1 domain. 6 disulfide bridges follow: Cys56–Cys80, Cys91–Cys133, Cys116–Cys123, Cys149–Cys203, Cys160–Cys190, and Cys174–Cys202. The interval 147 to 205 (ENCQFFHQERMEVCEKHQRWHTVVKEACLTEGMTLYSYGMLLPCGVDQFHGTEYVCCPQ) is cuBD subdomain. Positions 163, 167, and 184 each coordinate Cu cation. Positions 211–301 (SDSTMSKEEE…EPSSDGTISD (91 aa)) are disordered. Ser216 is subject to Phosphoserine. Composition is skewed to acidic residues over residues 218 to 231 (EEEE…EEDY) and 240 to 271 (TEAD…EVVE). The span at 272 to 284 (DRDYYYDSFKGDD) shows a compositional bias: basic and acidic residues. The BPTI/Kunitz inhibitor domain occupies 308–366 (VKAVCSQEAMTGPCRAVMPRWYFDLSKGKCVRFIYGGCGGNRNNFESEDYCMAVCKTMI). Disulfide bonds link Cys312/Cys362, Cys321/Cys345, and Cys337/Cys358. The 192-residue stretch at 375–566 (DVDVYFETSA…QEIQEEIDEL (192 aa)) folds into the E2 domain. A Phosphoserine modification is found at Ser592. A disordered region spans residues 597-616 (EIPPFHPFHPFPSLSENEDT). Ser628 carries an O-linked (Xyl...) (chondroitin sulfate) serine glycan. The chain crosses the membrane as a helical span at residues 696-718 (ALIGLLVIAVAIATVIVISLVML). At 719 to 765 (RKRQYGTISHGIVEVHPMLTPEERHLNKMQNHGYENPTYKYLEQMQI) the chain is on the cytoplasmic side. Residues 751-765 (GYENPTYKYLEQMQI) form an interaction with DAB2 region. The NPXY motif signature appears at 752–757 (YENPTY).

It belongs to the APP family. As to quaternary structure, interacts with CPEB1. Interacts (via NPXY motif) with DAB2 (via PID domain); the interaction is impaired by tyrosine phosphorylation of the NPXY motif. Interacts (via cytoplasmic domain) with APBB2/FE65L. Interacts (via intracellular domain) with APBB3/FE65L2.

Its subcellular location is the membrane. Its function is as follows. May play a role in the regulation of hemostasis. The soluble form may have inhibitory properties towards coagulation factors. May interact with cellular G-protein signaling pathways. May bind to the DNA 5'-GTCACATG-3'(CDEI box). Inhibits trypsin, chymotrypsin, plasmin, factor XIA and plasma and glandular kallikrein. Modulates the Cu/Zn nitric oxide-catalyzed autodegradation of GPC1 heparan sulfate side chains in fibroblasts. In Rattus norvegicus (Rat), this protein is Amyloid beta precursor like protein 2.